Consider the following 335-residue polypeptide: Dehydration-responsive element-binding protein 2A (335 aa).

Disordered stretches follow at residues 1-32 and 50-74; these read MAVYDQSGDRNRTQIDTSRKRKSRSRGDGTTV and STKKRKVPAKGSKKGCMKGKGGPEN. Positions 19 to 55 match the Nuclear localization signal motif; it reads RKRKSRSRGDGTTVAERLKRWKEYNETVEEVSTKKRK. Residues 52 to 66 show a composition bias toward basic residues; sequence KKRKVPAKGSKKGCM. Positions 78-135 form a DNA-binding region, AP2/ERF; sequence SFRGVRQRIWGKWVAEIREPNRGSRLWLGTFPTAQEAASAYDEAAKAMYGPLARLNFP. The tract at residues 279-304 is disordered; the sequence is QDRYPGNSVANGSYRPESQQSGFDPL. A compositionally biased stretch (polar residues) spans 286–304; it reads SVANGSYRPESQQSGFDPL.

This sequence belongs to the AP2/ERF transcription factor family. ERF subfamily. Interacts with MED25. Binds to DPB3-1 in the nucleus during heat-stress. In terms of processing, ubiquitinated by DRIP1 and DRIP2. Ubiquitination probably leads to its subsequent degradation, thus negatively regulating response to drought. Expressed preferentially in roots and stems, and at a lower level in leaves.

It is found in the nucleus. In terms of biological role, transcriptional activator that binds specifically to the DNA sequence 5'-[AG]CCGAC-3'. Binding to the C-repeat/DRE element mediates high salinity- and dehydration-inducible transcription. Promotes the expression of heat stress-inducible genes by contributing to the formation of a heat stress-specific transcriptional complex with NF-Y subunits (e.g. DPB3-1, NF-YA2 and NF-YB3) at the promoter of target genes, thus promoting heat tolerance. This is Dehydration-responsive element-binding protein 2A from Arabidopsis thaliana (Mouse-ear cress).